Consider the following 81-residue polypeptide: Defensin-like protein 115 (81 aa).

The signal sequence occupies residues 1 to 24; sequence MAITKKMLVVFLLAFLFVTSSVHC. 4 disulfide bridges follow: C40–C78, C46–C69, C54–C76, and C58–C77.

Belongs to the DEFL family.

The protein resides in the secreted. The chain is Defensin-like protein 115 from Arabidopsis thaliana (Mouse-ear cress).